A 73-amino-acid polypeptide reads, in one-letter code: MPPICNSIENENNSFELTTTISFLKKSKLFKKEINVNEIVSINISQILGEYNSFLINNTIEDLESAIAQNIHN.

This is an uncharacterized protein from Dictyostelium discoideum (Social amoeba).